The chain runs to 358 residues: MRERLLAAEKVTAIRWQGGALHLLDQRLLPSEERWLACDNVAQVAAAIRDMAVRGASAIGIAAAYGLVLALEERLAEGGDWEMDLEDDFLTLAEARPTAANLFWALNRMRERLLCLRPEEDVLAALEAEAVAIHDSDREANLTMAQQGIELIRRHQGNAQALLTFGNAGALASGGFGTALGVIRAGYLEGMVERVYAGETRPWLQGSRLTGWELANEGIPVTLCADSALAHLMKTKGITWVVVGADCIAANGDMAGKIGTYQLAVSAMHHGVRFMVVAPSTSIDLNLATGEDIPLEERDADEWLDFGGTPVSPGVEVFNPVFDVTPADLIDVIVTERGIVERPDAAKLAQLVCRKRLH.

Substrate is bound by residues 54–56, Arg-96, and Gln-205; that span reads RGA. The Proton donor role is filled by Asp-246. 256–257 serves as a coordination point for substrate; sequence GK.

This sequence belongs to the eIF-2B alpha/beta/delta subunits family. MtnA subfamily.

The enzyme catalyses 5-(methylsulfanyl)-alpha-D-ribose 1-phosphate = 5-(methylsulfanyl)-D-ribulose 1-phosphate. It participates in amino-acid biosynthesis; L-methionine biosynthesis via salvage pathway; L-methionine from S-methyl-5-thio-alpha-D-ribose 1-phosphate: step 1/6. Its function is as follows. Catalyzes the interconversion of methylthioribose-1-phosphate (MTR-1-P) into methylthioribulose-1-phosphate (MTRu-1-P). The polypeptide is Methylthioribose-1-phosphate isomerase (Pseudomonas putida (strain ATCC 47054 / DSM 6125 / CFBP 8728 / NCIMB 11950 / KT2440)).